Consider the following 141-residue polypeptide: Nucleoside diphosphate kinase (141 aa).

K11, F59, R87, T93, R104, and N114 together coordinate ATP. H117 functions as the Pros-phosphohistidine intermediate in the catalytic mechanism.

It belongs to the NDK family. Homotetramer. The cofactor is Mg(2+).

It localises to the cytoplasm. It catalyses the reaction a 2'-deoxyribonucleoside 5'-diphosphate + ATP = a 2'-deoxyribonucleoside 5'-triphosphate + ADP. The catalysed reaction is a ribonucleoside 5'-diphosphate + ATP = a ribonucleoside 5'-triphosphate + ADP. Functionally, major role in the synthesis of nucleoside triphosphates other than ATP. The ATP gamma phosphate is transferred to the NDP beta phosphate via a ping-pong mechanism, using a phosphorylated active-site intermediate. This Pseudomonas fluorescens (strain Pf0-1) protein is Nucleoside diphosphate kinase.